A 543-amino-acid chain; its full sequence is MSAVSYSMHRTTTTTSSSSHGGVSAGHAAEEFVASAEREKQEMQQLNSRLEVYISRVRQLEDRNKELVIELDTLRGSLGNDIGQIKFKFNDSLVKVRREISEAHSGTIGVEVKVDRLRDDLNDYRHRYEEARREVEREKTTWGGAISQAQAELDTNKSRYAAILDEEKRLYAEQDQLYLQLAAAKDELDAAIVDRRRLQAEEDDLKIELEFLGRIHSQEITELRTLLAQAPADTREFFKNELALAIREIKAEYDKIIQTTRVDLETIFQSKISAVESSIVSKNEAAVFRQEEIRKMNESITTLRAKLSELEARNSALEREANTLQIQLGEDQRAYESELHKRDNALRFMREDCQTLIAELQALLNTKQTLDTEIAIYRKLVESEEGRFTHVGQGVVVAQQETTRLVPVEQDHWDSGEVQTRSSFKRHAKGNVSIVECDPQGKYIILENTSGSVAEDVSNFEIRRVIDGVQAFVFRLPSHLVIQQHGHLKIYGRNSGGINSPPDSIVMESHPSWGQGGQVETFLYNSHGIEKASHIQTTVASSR.

Residues 1–10 (MSAVSYSMHR) show a composition bias toward polar residues. Positions 1-27 (MSAVSYSMHRTTTTTSSSSHGGVSAGH) are disordered. Residues 1–42 (MSAVSYSMHRTTTTTSSSSHGGVSAGHAAEEFVASAEREKQE) are head. In terms of domain architecture, IF rod spans 39-388 (EKQEMQQLNS…KLVESEEGRF (350 aa)). Positions 43 to 74 (MQQLNSRLEVYISRVRQLEDRNKELVIELDTL) are coil 1A. Positions 75–88 (RGSLGNDIGQIKFK) are linker 1. Residues 89 to 223 (FNDSLVKVRR…RIHSQEITEL (135 aa)) are coil 1B. Positions 224-240 (RTLLAQAPADTREFFKN) are linker 12. Residues 241 to 387 (ELALAIREIK…RKLVESEEGR (147 aa)) are coil 2. The tail stretch occupies residues 388–542 (FTHVGQGVVV…SHIQTTVASS (155 aa)). The 119-residue stretch at 420–538 (TRSSFKRHAK…IEKASHIQTT (119 aa)) folds into the LTD domain.

It belongs to the intermediate filament family. Expression is restricted to a discrete circumferential subapical layer within the intestinal terminal web (known as the 'endotube'); this layer joins directly to the apical junction complexes that connect adjacent gut cells.

It is found in the cytoplasm. Functionally, cytoplasmic intermediate filaments provide mechanical strength to cells. Not essential protein. Component of the terminal web (organelle-depleted, intermediate filament-rich layer of cytoplasm that underlies the apical microvilli of polarized epithelial cells) in embryonic through to adult gut cells. Correct localization of filaments requires let-413. The protein is Intermediate filament protein ifb-2 (ifb-2) of Caenorhabditis elegans.